We begin with the raw amino-acid sequence, 557 residues long: Dihydroxy-acid dehydratase (557 aa).

Residue C50 coordinates [2Fe-2S] cluster. D82 serves as a coordination point for Mg(2+). C123 contributes to the [2Fe-2S] cluster binding site. The Mg(2+) site is built by D124 and K125. K125 bears the N6-carboxylysine mark. Residue C195 participates in [2Fe-2S] cluster binding. E447 is a Mg(2+) binding site. The Proton acceptor role is filled by S473.

The protein belongs to the IlvD/Edd family. Homodimer. [2Fe-2S] cluster is required as a cofactor. It depends on Mg(2+) as a cofactor.

It catalyses the reaction (2R)-2,3-dihydroxy-3-methylbutanoate = 3-methyl-2-oxobutanoate + H2O. The enzyme catalyses (2R,3R)-2,3-dihydroxy-3-methylpentanoate = (S)-3-methyl-2-oxopentanoate + H2O. Its pathway is amino-acid biosynthesis; L-isoleucine biosynthesis; L-isoleucine from 2-oxobutanoate: step 3/4. It functions in the pathway amino-acid biosynthesis; L-valine biosynthesis; L-valine from pyruvate: step 3/4. In terms of biological role, functions in the biosynthesis of branched-chain amino acids. Catalyzes the dehydration of (2R,3R)-2,3-dihydroxy-3-methylpentanoate (2,3-dihydroxy-3-methylvalerate) into 2-oxo-3-methylpentanoate (2-oxo-3-methylvalerate) and of (2R)-2,3-dihydroxy-3-methylbutanoate (2,3-dihydroxyisovalerate) into 2-oxo-3-methylbutanoate (2-oxoisovalerate), the penultimate precursor to L-isoleucine and L-valine, respectively. This chain is Dihydroxy-acid dehydratase, found in Herminiimonas arsenicoxydans.